An 89-amino-acid polypeptide reads, in one-letter code: Small ribosomal subunit protein uS15 (89 aa).

It belongs to the universal ribosomal protein uS15 family. Part of the 30S ribosomal subunit. Forms a bridge to the 50S subunit in the 70S ribosome, contacting the 23S rRNA.

One of the primary rRNA binding proteins, it binds directly to 16S rRNA where it helps nucleate assembly of the platform of the 30S subunit by binding and bridging several RNA helices of the 16S rRNA. In terms of biological role, forms an intersubunit bridge (bridge B4) with the 23S rRNA of the 50S subunit in the ribosome. The polypeptide is Small ribosomal subunit protein uS15 (Lactiplantibacillus plantarum (strain ATCC BAA-793 / NCIMB 8826 / WCFS1) (Lactobacillus plantarum)).